The sequence spans 260 residues: UPF0246 protein BURPS668_1321 (260 aa).

This sequence belongs to the UPF0246 family.

The sequence is that of UPF0246 protein BURPS668_1321 from Burkholderia pseudomallei (strain 668).